Reading from the N-terminus, the 296-residue chain is Elongation factor Ts (296 aa).

Positions 79–82 are involved in Mg(2+) ion dislocation from EF-Tu; sequence TDFV.

Belongs to the EF-Ts family.

The protein resides in the cytoplasm. Associates with the EF-Tu.GDP complex and induces the exchange of GDP to GTP. It remains bound to the aminoacyl-tRNA.EF-Tu.GTP complex up to the GTP hydrolysis stage on the ribosome. This is Elongation factor Ts from Acholeplasma laidlawii (strain PG-8A).